Reading from the N-terminus, the 468-residue chain is 6-phospho-beta-galactosidase (468 aa).

The D-galactose 6-phosphate site is built by Gln19, His116, Asn159, Glu160, and Asn297. Glu160 (proton donor) is an active-site residue. The active-site Nucleophile is the Glu375. D-galactose 6-phosphate is bound by residues Ser428, Trp429, Lys435, and Tyr437.

Belongs to the glycosyl hydrolase 1 family.

It carries out the reaction a 6-phospho-beta-D-galactoside + H2O = D-galactose 6-phosphate + an alcohol. It participates in carbohydrate metabolism; lactose degradation; D-galactose 6-phosphate and beta-D-glucose from lactose 6-phosphate: step 1/1. In Streptococcus mutans serotype c (strain ATCC 700610 / UA159), this protein is 6-phospho-beta-galactosidase.